A 691-amino-acid polypeptide reads, in one-letter code: DNA ligase (691 aa).

Residues 41–45 (DAEYD), 90–91 (SL), and Glu130 each bind NAD(+). Lys132 functions as the N6-AMP-lysine intermediate in the catalytic mechanism. NAD(+) is bound by residues Arg153, Glu190, Lys307, and Lys331. Residues Cys425, Cys428, Cys443, and Cys449 each coordinate Zn(2+). The BRCT domain maps to 610-691 (APQGVLAGKT…MHTLLEGHAR (82 aa)).

It belongs to the NAD-dependent DNA ligase family. LigA subfamily. It depends on Mg(2+) as a cofactor. The cofactor is Mn(2+).

It carries out the reaction NAD(+) + (deoxyribonucleotide)n-3'-hydroxyl + 5'-phospho-(deoxyribonucleotide)m = (deoxyribonucleotide)n+m + AMP + beta-nicotinamide D-nucleotide.. Its function is as follows. DNA ligase that catalyzes the formation of phosphodiester linkages between 5'-phosphoryl and 3'-hydroxyl groups in double-stranded DNA using NAD as a coenzyme and as the energy source for the reaction. It is essential for DNA replication and repair of damaged DNA. The polypeptide is DNA ligase (Burkholderia pseudomallei (strain 1710b)).